The primary structure comprises 571 residues: Putative clathrin assembly protein At2g01600 (571 aa).

The ENTH domain occupies 24-161; sequence RVNSEYADLD…ECFRVLKYDT (138 aa). Disordered regions lie at residues 325–346 and 474–571; these read YRPD…REML and PAPN…TGLI. Basic and acidic residues predominate over residues 337 to 346; it reads EPSHEEREML. A compositionally biased stretch (low complexity) spans 508-522; sequence QQTYQHQPQPTYQHQ. Polar residues-rich tracts occupy residues 523–532 and 543–571; these read SNPPTNNSNP and PVSQ…TGLI.

The protein resides in the membrane. It localises to the clathrin-coated pit. Its subcellular location is the golgi apparatus. The protein localises to the cytoplasmic vesicle. It is found in the clathrin-coated vesicle. This chain is Putative clathrin assembly protein At2g01600, found in Arabidopsis thaliana (Mouse-ear cress).